Reading from the N-terminus, the 1234-residue chain is MEGWSQVALVPLKNSNNNSNSNSSSNNSSNGVLVQDPISTVTTTVFDSVQNLVWCGDTSGYVRSLSSVKTSPYSIQLYPYTKFRTNTLNQPIIQILSHREGVLSLLNDQLSIYNRRGVPRNAVNSMSFKESNGRELFKDLKTMSFNCNSFNEIVVGTELDLIKVDMNKSNLVQQFNHTGKVAMVKEAPKLLALASSTGSLELFDPTSNSSIKTFSAHNGYMSDMDIKGNYIATCGNSIRPKRYHYHQAPEYTADPLVNIFDIRTMKAVAPVAFPAGVSSVRFHPKLPNILIVTSAYGLIEFVDIFDQTNVSVYHADMSAATPPLPPAGSSAAQQQKQQQQQQQQPHLSGLEISENGDFFMFNDGFSNLHLWSITNSGTLSKNFVNFPQEIERPDIVNGPSGVLGGGSGSGDGAFIDIDADVPLSVVGMPYYKELLLSNWPNDLKFVKEKARLPEPIDPDLLSIFEKQQQQKISQTPKWIPYDSLKYGTCNIPEYYSLTSQKDTQIPKFLSEKNGGQKQRQKSIQALEDSIFQCQNDEKIPNCYSRLQIQYSKFGVKDFDFAFYNRTQEYCGLENHSDNSYINSLLQLYRFQSVFYNKVVHSLSNEWLPNDEATIETNPEGSSILNELAYLFDMMFKAKSRNVKTYNFSQVMNHDKQAAKLINLNELMNLNSHEVRELIIAFNNYLLTRLSMDFRNQFNFNFDLTELAYEIEVRGRGHSCPIYDKQMGAMFSLELITPPHNMMSKMSILVNPNTQQDQQQQQQQQQQQQQQQQPTNLANIRKNLNILTYLEYSMNQYKTIPCTQHQHFHPHTLEIRTSITKLPPVLVLNVNLTNEEFRIINSLKQWLVPDLYAVRATNNGSNRGYSFKPSMPVSGDFKKYQLLGYVCEISHQVDTSRTGGHNLVSFVKIKDEWMFFNDYLVIPIPEEEVFNLTYSWKKPVIVIYQEVDKMDKVEPFRHITHFQGNDSILYRDHFAGPIRELYQREYTLLTREKEAPQPGTLVAIDAEFVTLKPEQLEISYNGQKKLVKPKELSLARVSVLRGGREGINSNITGNNNDDNNNISGMIIDDPLFGEAFIDDYIVHKSHIYDYTTNFSGIEPNDLDIHKSSKNLVTLQTAYRKLWLLLNLGVIFVGHGLYTDFRTINLQVPEEQIRDTADFYYKSSFKRQLSLKFLAYVMLKERVQKGNHDSIEDARTALLLYKKYVELNQKSTNEFEKMLNFVYEEGNRLKYRVPEL.

The tract at residues 12-32 (LKNSNNNSNSNSSSNNSSNGV) is disordered. The segment covering 14–30 (NSNNNSNSNSSSNNSSN) has biased composition (low complexity). 3 WD repeats span residues 176–213 (NHTG…SIKT), 272–315 (AFPA…VYHA), and 342–381 (QQQP…TLSK). Residues 323–346 (PLPPAGSSAAQQQKQQQQQQQQPH) are disordered. Residues 333–344 (QQQKQQQQQQQQ) are compositionally biased toward low complexity. The interval 383–537 (FVNFPQEIER…DSIFQCQNDE (155 aa)) is linker. In terms of domain architecture, USP spans 538–946 (KIPNCYSRLQ…KPVIVIYQEV (409 aa)). A disordered region spans residues 751-775 (PNTQQDQQQQQQQQQQQQQQQQPTN). Positions 754–772 (QQDQQQQQQQQQQQQQQQQ) are enriched in low complexity. Residues Asp-1004, Glu-1006, Asp-1138, and Asp-1191 each contribute to the a divalent metal cation site. The Exonuclease domain maps to 1072–1199 (GEAFIDDYIV…EDARTALLLY (128 aa)).

This sequence belongs to the peptidase C19 family. PAN2 subfamily. As to quaternary structure, forms a heterotrimer with an asymmetric homodimer of the regulatory subunit PAN3 to form the poly(A)-nuclease (PAN) deadenylation complex. The cofactor is a divalent metal cation.

Its subcellular location is the cytoplasm. The enzyme catalyses Exonucleolytic cleavage of poly(A) to 5'-AMP.. With respect to regulation, positively regulated by the regulatory subunit PAN3. In terms of biological role, catalytic subunit of the poly(A)-nuclease (PAN) deadenylation complex, one of two cytoplasmic mRNA deadenylases involved in mRNA turnover. PAN specifically shortens poly(A) tails of RNA and the activity is stimulated by poly(A)-binding protein PAB1. PAN deadenylation is followed by rapid degradation of the shortened mRNA tails by the CCR4-NOT complex. Deadenylated mRNAs are then degraded by two alternative mechanisms, namely exosome-mediated 3'-5' exonucleolytic degradation, or deadenylation-dependent mRNA decaping and subsequent 5'-3' exonucleolytic degradation by XRN1. May also be involved in post-transcriptional maturation of mRNA poly(A) tails. In Lodderomyces elongisporus (strain ATCC 11503 / CBS 2605 / JCM 1781 / NBRC 1676 / NRRL YB-4239) (Yeast), this protein is PAN2-PAN3 deadenylation complex catalytic subunit PAN2.